A 271-amino-acid chain; its full sequence is Putative phosphoenolpyruvate synthase regulatory protein (271 aa).

152 to 159 (GVSRSGKT) is a binding site for ADP.

It belongs to the pyruvate, phosphate/water dikinase regulatory protein family. PSRP subfamily.

It catalyses the reaction [pyruvate, water dikinase] + ADP = [pyruvate, water dikinase]-phosphate + AMP + H(+). The catalysed reaction is [pyruvate, water dikinase]-phosphate + phosphate + H(+) = [pyruvate, water dikinase] + diphosphate. Functionally, bifunctional serine/threonine kinase and phosphorylase involved in the regulation of the phosphoenolpyruvate synthase (PEPS) by catalyzing its phosphorylation/dephosphorylation. The chain is Putative phosphoenolpyruvate synthase regulatory protein from Dichelobacter nodosus (strain VCS1703A).